The primary structure comprises 165 residues: Bark lectin isoform 1 (165 aa).

2 N-linked (GlcNAc...) asparagine glycosylation sites follow: N27 and N57. 2 disulfide bridges follow: C33–C80 and C126–C133.

Belongs to the protease inhibitor I3 (leguminous Kunitz-type inhibitor) family. Dimer.

In terms of biological role, glucose and N-acetylglucosamine binding lectin. Has hemagglutinating activity against human and rabbit erythrocytes which does not require divalent cations. Inhibits factor Xa and, to a lesser extent, trypsin. Does not inhibit neutrophil elastase, human plasma kallikrein, papain, human plasmin, porcine pancreatic kallikrein and bovin chymotrypsin. Has insecticidal activity against the termite species N.corniger. Induces apoptosis in prostrate cancer cell lines DU145 and PC3. The polypeptide is Bark lectin isoform 1 (Crateva tapia (Garlic-pear tree)).